A 673-amino-acid polypeptide reads, in one-letter code: tRNA 5-methylaminomethyl-2-thiouridine biosynthesis bifunctional protein MnmC (673 aa).

Positions 1–245 (MSHAPIQTAA…KREMLIGELP (245 aa)) are tRNA (mnm(5)s(2)U34)-methyltransferase. An FAD-dependent cmnm(5)s(2)U34 oxidoreductase region spans residues 272-673 (IGGGVASALT…VRKLLKGRAV (402 aa)).

The protein in the N-terminal section; belongs to the methyltransferase superfamily. tRNA (mnm(5)s(2)U34)-methyltransferase family. In the C-terminal section; belongs to the DAO family. FAD serves as cofactor.

The protein resides in the cytoplasm. The enzyme catalyses 5-aminomethyl-2-thiouridine(34) in tRNA + S-adenosyl-L-methionine = 5-methylaminomethyl-2-thiouridine(34) in tRNA + S-adenosyl-L-homocysteine + H(+). Catalyzes the last two steps in the biosynthesis of 5-methylaminomethyl-2-thiouridine (mnm(5)s(2)U) at the wobble position (U34) in tRNA. Catalyzes the FAD-dependent demodification of cmnm(5)s(2)U34 to nm(5)s(2)U34, followed by the transfer of a methyl group from S-adenosyl-L-methionine to nm(5)s(2)U34, to form mnm(5)s(2)U34. The chain is tRNA 5-methylaminomethyl-2-thiouridine biosynthesis bifunctional protein MnmC from Serratia proteamaculans (strain 568).